The primary structure comprises 214 residues: tRNA (guanine-N(7)-)-methyltransferase (214 aa).

S-adenosyl-L-methionine contacts are provided by Glu-45, Glu-70, Asp-97, and Asp-119. Asp-119 is an active-site residue. Substrate-binding positions include Lys-123, Asp-155, and 192-195 (TEYE).

Belongs to the class I-like SAM-binding methyltransferase superfamily. TrmB family.

It carries out the reaction guanosine(46) in tRNA + S-adenosyl-L-methionine = N(7)-methylguanosine(46) in tRNA + S-adenosyl-L-homocysteine. It participates in tRNA modification; N(7)-methylguanine-tRNA biosynthesis. Its function is as follows. Catalyzes the formation of N(7)-methylguanine at position 46 (m7G46) in tRNA. This chain is tRNA (guanine-N(7)-)-methyltransferase, found in Clostridioides difficile (strain 630) (Peptoclostridium difficile).